The chain runs to 361 residues: S-adenosylmethionine:tRNA ribosyltransferase-isomerase (361 aa).

This sequence belongs to the QueA family. In terms of assembly, monomer.

It localises to the cytoplasm. The enzyme catalyses 7-aminomethyl-7-carbaguanosine(34) in tRNA + S-adenosyl-L-methionine = epoxyqueuosine(34) in tRNA + adenine + L-methionine + 2 H(+). It participates in tRNA modification; tRNA-queuosine biosynthesis. In terms of biological role, transfers and isomerizes the ribose moiety from AdoMet to the 7-aminomethyl group of 7-deazaguanine (preQ1-tRNA) to give epoxyqueuosine (oQ-tRNA). This chain is S-adenosylmethionine:tRNA ribosyltransferase-isomerase, found in Rhizobium etli (strain ATCC 51251 / DSM 11541 / JCM 21823 / NBRC 15573 / CFN 42).